Consider the following 208-residue polypeptide: Na(+)-translocating NADH-quinone reductase subunit D (208 aa).

Helical transmembrane passes span 42–62 (IVMT…ISLI), 70–90 (VRII…DQIL), 103–123 (VFVG…AFAM), 131–151 (FVDG…VAFI), and 178–198 (NGLF…IWGI).

The protein belongs to the NqrDE/RnfAE family. Composed of six subunits; NqrA, NqrB, NqrC, NqrD, NqrE and NqrF.

The protein localises to the cell inner membrane. It catalyses the reaction a ubiquinone + n Na(+)(in) + NADH + H(+) = a ubiquinol + n Na(+)(out) + NAD(+). In terms of biological role, NQR complex catalyzes the reduction of ubiquinone-1 to ubiquinol by two successive reactions, coupled with the transport of Na(+) ions from the cytoplasm to the periplasm. NqrA to NqrE are probably involved in the second step, the conversion of ubisemiquinone to ubiquinol. This is Na(+)-translocating NADH-quinone reductase subunit D from Pasteurella multocida (strain Pm70).